Reading from the N-terminus, the 155-residue chain is Ribosomal RNA large subunit methyltransferase H (155 aa).

Residues Leu72, Gly103, and 122–127 contribute to the S-adenosyl-L-methionine site; that span reads LSALTL.

This sequence belongs to the RNA methyltransferase RlmH family. As to quaternary structure, homodimer.

It localises to the cytoplasm. It catalyses the reaction pseudouridine(1915) in 23S rRNA + S-adenosyl-L-methionine = N(3)-methylpseudouridine(1915) in 23S rRNA + S-adenosyl-L-homocysteine + H(+). Its function is as follows. Specifically methylates the pseudouridine at position 1915 (m3Psi1915) in 23S rRNA. In Enterobacter sp. (strain 638), this protein is Ribosomal RNA large subunit methyltransferase H.